The following is a 123-amino-acid chain: Putative C-type lectin protein FPV003/FPV258 (123 aa).

A C-type lectin domain is found at cysteine 21 to isoleucine 122.

The chain is Putative C-type lectin protein FPV003/FPV258 from Fowlpox virus (strain NVSL) (FPV).